The chain runs to 80 residues: MSKEKSYVIALLLSLLLCLSFQVGVSEANYNAVTTRYSDSPRCANGSSASPPTRHCPRGRPRPPTPRVAVHSNSTKGKGP.

The N-terminal stretch at 1 to 28 (MSKEKSYVIALLLSLLLCLSFQVGVSEA) is a signal peptide. 2 short sequence motifs (SCOOP motif) span residues 32 to 46 (AVTTRYSDSPRCANG) and 66 to 80 (PRVAVHSNSTKGKGP). The interval 37-80 (YSDSPRCANGSSASPPTRHCPRGRPRPPTPRVAVHSNSTKGKGP) is disordered. 2 short sequence motifs (sxS motif essential for MIK2 binding) span residues 38–40 (SDS) and 72–74 (SNS). Residues 71 to 80 (HSNSTKGKGP) show a composition bias toward polar residues.

This sequence belongs to the serine rich endogenous peptide (SCOOP) phytocytokine family. As to quaternary structure, interacts with MIK2 (via extracellular leucine-rich repeat domain); this interaction triggers the formation of complex between MIK2 and the BAK1/SERK3 and SERK4 coreceptors, and subsequent BAK1 activation by phosphorylation. As to expression, mostly expressed in leaves, and, to a lower extent, in seedlings shoots, roots, stems, siliques, seeds and flowers.

The protein localises to the cell membrane. Its subcellular location is the secreted. The protein resides in the extracellular space. It is found in the apoplast. It localises to the endoplasmic reticulum. The protein localises to the golgi apparatus. Functionally, brassicaceae-specific phytocytokine (plant endogenous peptide released into the apoplast) perceived by MIK2 in a BAK1/SERK3 and SERK4 coreceptors-dependent manner, that modulates various physiological and antimicrobial processes including growth prevention and reactive oxygen species (ROS) response regulation. Inhibits root growth. The chain is Serine rich endogenous peptide 15 from Arabidopsis thaliana (Mouse-ear cress).